A 300-amino-acid polypeptide reads, in one-letter code: Phosphoenolpyruvate phosphomutase (300 aa).

A propeptide spanning residues 1–10 (MLANSLKSFF) is cleaved from the precursor. Asp66 (nucleophile) is an active-site residue.

Belongs to the isocitrate lyase/PEP mutase superfamily. PEP mutase family.

It carries out the reaction phosphoenolpyruvate + H(+) = 3-phosphonopyruvate. Its pathway is phosphorus metabolism; phosphonate biosynthesis. In terms of biological role, formation of a carbon-phosphorus bond by converting phosphoenolpyruvate (PEP) to phosphonopyruvate (P-Pyr). The sequence is that of Phosphoenolpyruvate phosphomutase (PEPM) from Tetrahymena pyriformis.